Consider the following 339-residue polypeptide: D-erythrose-4-phosphate dehydrogenase (339 aa).

Residues 12–13 (RI) and Arg-81 each bind NAD(+). Residues 154–156 (SCT), Arg-200, 213–214 (TK), and Arg-236 contribute to the substrate site. Residue Cys-155 is the Nucleophile of the active site. Residue Asn-318 participates in NAD(+) binding.

Belongs to the glyceraldehyde-3-phosphate dehydrogenase family. Epd subfamily. Homotetramer.

It is found in the cytoplasm. It carries out the reaction D-erythrose 4-phosphate + NAD(+) + H2O = 4-phospho-D-erythronate + NADH + 2 H(+). It functions in the pathway cofactor biosynthesis; pyridoxine 5'-phosphate biosynthesis; pyridoxine 5'-phosphate from D-erythrose 4-phosphate: step 1/5. In terms of biological role, catalyzes the NAD-dependent conversion of D-erythrose 4-phosphate to 4-phosphoerythronate. The protein is D-erythrose-4-phosphate dehydrogenase of Escherichia coli (strain UTI89 / UPEC).